The primary structure comprises 270 residues: Tryptophan synthase alpha chain (270 aa).

Catalysis depends on proton acceptor residues E49 and D60.

The protein belongs to the TrpA family. In terms of assembly, tetramer of two alpha and two beta chains.

It catalyses the reaction (1S,2R)-1-C-(indol-3-yl)glycerol 3-phosphate + L-serine = D-glyceraldehyde 3-phosphate + L-tryptophan + H2O. The protein operates within amino-acid biosynthesis; L-tryptophan biosynthesis; L-tryptophan from chorismate: step 5/5. Its function is as follows. The alpha subunit is responsible for the aldol cleavage of indoleglycerol phosphate to indole and glyceraldehyde 3-phosphate. This is Tryptophan synthase alpha chain from Marinobacter nauticus (strain ATCC 700491 / DSM 11845 / VT8) (Marinobacter aquaeolei).